Here is a 606-residue protein sequence, read N- to C-terminus: Dihydroxy-acid dehydratase ilvC, mitochondrial (606 aa).

A [2Fe-2S] cluster-binding site is contributed by cysteine 84. Residue aspartate 116 coordinates Mg(2+). Cysteine 157 serves as a coordination point for [2Fe-2S] cluster. Aspartate 158 contacts Mg(2+). A [2Fe-2S] cluster-binding site is contributed by cysteine 232. Glutamate 485 serves as a coordination point for Mg(2+). Serine 511 (proton acceptor) is an active-site residue.

This sequence belongs to the IlvD/Edd family. Requires [2Fe-2S] cluster as cofactor. Mg(2+) is required as a cofactor.

The protein localises to the mitochondrion. It catalyses the reaction (2R)-2,3-dihydroxy-3-methylbutanoate = 3-methyl-2-oxobutanoate + H2O. The catalysed reaction is (2R,3R)-2,3-dihydroxy-3-methylpentanoate = (S)-3-methyl-2-oxopentanoate + H2O. The protein operates within amino-acid biosynthesis; L-isoleucine biosynthesis; L-isoleucine from 2-oxobutanoate: step 3/4. It participates in amino-acid biosynthesis; L-valine biosynthesis; L-valine from pyruvate: step 3/4. With respect to regulation, DHAD activity is inhibited in dose-dependent manner by 2-hydroxy-3-methylbutyric acid with an IC(50) of about 8 mM. Functionally, dihydroxyacid dehydratase that catalyzes the third step in the common pathway leading to biosynthesis of branched-chain amino acids. Catalyzes the dehydration of (2R,3R)-2,3-dihydroxy-3-methylpentanoate (2,3-dihydroxy-3-methylvalerate) into 2-oxo-3-methylpentanoate (2-oxo-3-methylvalerate) and of (2R)-2,3-dihydroxy-3-methylbutanoate (2,3-dihydroxyisovalerate) into 2-oxo-3-methylbutanoate (2-oxoisovalerate), the penultimate precursor to L-isoleucine and L-valine, respectively. IlvC and the branched-chain amino acid biosynthesis are crucial for virulence and may be a potential target to develop antifungal agents. The chain is Dihydroxy-acid dehydratase ilvC, mitochondrial from Aspergillus fumigatus (strain ATCC MYA-4609 / CBS 101355 / FGSC A1100 / Af293) (Neosartorya fumigata).